Here is a 442-residue protein sequence, read N- to C-terminus: UPF0489 protein C5orf22 homolog (442 aa).

The tract at residues 175-208 is disordered; sequence SSAKKPKLALEDSRNTASTNCDSSSEGLEKDTAT. Residues 189–200 show a composition bias toward polar residues; the sequence is NTASTNCDSSSE.

Belongs to the UPF0489 family.

The sequence is that of UPF0489 protein C5orf22 homolog from Pongo abelii (Sumatran orangutan).